Here is a 343-residue protein sequence, read N- to C-terminus: Ferredoxin--NADP reductase (343 aa).

Residues D36, Q44, Y49, V89, F124, D289, and T330 each contribute to the FAD site.

This sequence belongs to the ferredoxin--NADP reductase type 2 family. In terms of assembly, homodimer. FAD is required as a cofactor.

It catalyses the reaction 2 reduced [2Fe-2S]-[ferredoxin] + NADP(+) + H(+) = 2 oxidized [2Fe-2S]-[ferredoxin] + NADPH. The sequence is that of Ferredoxin--NADP reductase from Mesorhizobium japonicum (strain LMG 29417 / CECT 9101 / MAFF 303099) (Mesorhizobium loti (strain MAFF 303099)).